Consider the following 451-residue polypeptide: Protein tweety homolog 1-B (451 aa).

Over 1 to 43 (MSTSHGYRASWWTYILHQVPHTNFQFEVVDNQFAPQEWSYQQA) the chain is Extracellular. A helical membrane pass occupies residues 44-64 (LLFLASIAGLCLAISLVLICV). Over 65-86 (YLIKFCCCASQEDDDSKSHRVC) the chain is Cytoplasmic. The chain crosses the membrane as a helical span at residues 87–107 (CVTWSCVAAVIICCAGIGIGF). Over 108–214 (YGNSETNDGV…QVNFIEDYRW (107 aa)) the chain is Extracellular. Asn-128 carries N-linked (GlcNAc...) asparagine glycosylation. The helical transmembrane segment at 215-235 (LAYILLLLLDLIICLFTLLSL) threads the bilayer. The Cytoplasmic portion of the chain corresponds to 236–240 (AKQIK). A helical transmembrane segment spans residues 241-261 (WLVIVMTVVSFFVLLLSWGSM). The Extracellular portion of the chain corresponds to 262-390 (GLEMATAVGL…LKGLCYDGME (129 aa)). 2 cysteine pairs are disulfide-bonded: Cys-275–Cys-385 and Cys-303–Cys-370. Asn-284 and Asn-355 each carry an N-linked (GlcNAc...) asparagine glycan. Residues 391-411 (GILFLLLFSFLSALSFTAAVC) form a helical membrane-spanning segment. The Cytoplasmic segment spans residues 412-451 (SLPRAWKRFRNRDLDYDDMDEDDPFNPQESKRFVQWQSSI).

It belongs to the tweety family. As to quaternary structure, homotetramer; disulfide-linked. Homodimer.

The protein localises to the cell membrane. It catalyses the reaction chloride(in) = chloride(out). It carries out the reaction L-glutamate(out) = L-glutamate(in). May act as a calcium-independent, swelling-dependent volume-regulated anion channel (VRAC-swell) which plays a pivotal role in the process of regulatory volume decrease (RVD) in the brain through the efflux of anions like chloride and organic osmolytes like glutamate. This chain is Protein tweety homolog 1-B (ttyh1-b), found in Xenopus laevis (African clawed frog).